We begin with the raw amino-acid sequence, 180 residues long: Large ribosomal subunit protein uL5 (180 aa).

This sequence belongs to the universal ribosomal protein uL5 family. In terms of assembly, part of the 50S ribosomal subunit; part of the 5S rRNA/L5/L18/L25 subcomplex. Contacts the 5S rRNA and the P site tRNA. Forms a bridge to the 30S subunit in the 70S ribosome.

In terms of biological role, this is one of the proteins that bind and probably mediate the attachment of the 5S RNA into the large ribosomal subunit, where it forms part of the central protuberance. In the 70S ribosome it contacts protein S13 of the 30S subunit (bridge B1b), connecting the 2 subunits; this bridge is implicated in subunit movement. Contacts the P site tRNA; the 5S rRNA and some of its associated proteins might help stabilize positioning of ribosome-bound tRNAs. The polypeptide is Large ribosomal subunit protein uL5 (Oenococcus oeni (strain ATCC BAA-331 / PSU-1)).